The primary structure comprises 460 residues: C4-dicarboxylate transport transcriptional regulatory protein DctD (460 aa).

The Response regulatory domain occupies 6–120 (SVFLIDDDRD…RLVQSARRAE (115 aa)). Aspartate 55 is modified (4-aspartylphosphate). Residues 145–374 (LIGQTPVMER…LSHFAERVAL (230 aa)) form the Sigma-54 factor interaction domain. Residues 173–180 (GETGSGKE) and 236–245 (ASGGTLFLDE) each bind ATP. Positions 332–345 (ARASERFGREVPAI) are inter-domain linker. Residues 417 to 436 (VKETLQALGIPRKTFYDKLQ) constitute a DNA-binding region (H-T-H motif).

Phosphorylated by DctB.

It localises to the cytoplasm. Its function is as follows. Member of the two-component regulatory system DctB/DctD involved in the transport of C4-dicarboxylates. When activated by DctB acts in conjunction with sigma-54 to activate the transcription of dctA. The sequence is that of C4-dicarboxylate transport transcriptional regulatory protein DctD (dctD) from Rhizobium meliloti (strain 1021) (Ensifer meliloti).